The sequence spans 399 residues: Ribose-phosphate pyrophosphokinase 2, chloroplastic (399 aa).

A chloroplast-targeting transit peptide spans 1-32; the sequence is MAAKAAALSSSPFVSSRRLSSPAASLRARTPR. Asp-214, His-216, Asp-225, and Asp-229 together coordinate Mg(2+). A binding of phosphoribosylpyrophosphate region spans residues 299–314; it reads GKVAIMVDDMIDTAGT.

Belongs to the ribose-phosphate pyrophosphokinase family. It depends on Mg(2+) as a cofactor.

The protein resides in the plastid. It is found in the chloroplast. It carries out the reaction D-ribose 5-phosphate + ATP = 5-phospho-alpha-D-ribose 1-diphosphate + AMP + H(+). This chain is Ribose-phosphate pyrophosphokinase 2, chloroplastic, found in Oryza sativa subsp. japonica (Rice).